The chain runs to 65 residues: Disintegrin VLO4 (65 aa).

The 65-residue stretch at 1–65 folds into the Disintegrin domain; sequence MNSGNPCCDP…PDCPRNPWKG (65 aa). 4 disulfides stabilise this stretch: Cys-7–Cys-30, Cys-21–Cys-27, Cys-26–Cys-51, and Cys-39–Cys-58. The short motif at 43–45 is the Cell attachment site element; it reads RGD.

Belongs to the disintegrin family. Dimeric disintegrin subfamily. Homodimer; disulfide-linked. Expressed by the venom gland.

It is found in the secreted. Poor inhibitor of platelet aggregation. The disintegrin inhibits the adhesion of cells expressing the RGD-dependent integrin alpha-5/beta-1 (ITGA5/ITGB1) to immobilized fibronectin. Inhibition on alpha-2b/beta-3 (ITGA2B/ITGB3) is low. The polypeptide is Disintegrin VLO4 (Macrovipera lebetina obtusa (Levant blunt-nosed viper)).